Here is a 270-residue protein sequence, read N- to C-terminus: Tetraspanin-17 (270 aa).

Over Met-1 to Tyr-19 the chain is Cytoplasmic. A helical membrane pass occupies residues Phe-20 to Leu-40. Residues Trp-41 to Pro-63 lie on the Extracellular side of the membrane. A glycan (N-linked (GlcNAc...) asparagine) is linked at Asn-51. The helical transmembrane segment at Val-64 to Gly-84 threads the bilayer. The Cytoplasmic segment spans residues Ala-85–Lys-94. The helical transmembrane segment at Phe-95–Phe-115 threads the bilayer. The Extracellular portion of the chain corresponds to Val-116–Asn-234. Intrachain disulfides connect Cys-155-Cys-223, Cys-156-Cys-188, Cys-172-Cys-182, and Cys-189-Cys-202. A glycan (N-linked (GlcNAc...) asparagine) is linked at Asn-171. The chain crosses the membrane as a helical span at residues Leu-235 to Leu-255. Topologically, residues Ala-256–Trp-270 are cytoplasmic.

The protein belongs to the tetraspanin (TM4SF) family. As to quaternary structure, interacts with ADAM10; the interaction influences ADAM10 substrate specificity, endocytosis and turnover.

It is found in the cell membrane. Its function is as follows. Part of TspanC8 subgroup, composed of 6 members that interact with the transmembrane metalloprotease ADAM10. This interaction is required for ADAM10 exit from the endoplasmic reticulum and for enzymatic maturation and trafficking to the cell surface as well as substrate specificity. Different TspanC8/ADAM10 complexes have distinct substrates. Seems to regulate VE-cadherin expression in endothelial cells probably through interaction with ADAM10, promoting leukocyte transmigration. This is Tetraspanin-17 from Homo sapiens (Human).